Consider the following 327-residue polypeptide: Undecaprenyl-phosphate 4-deoxy-4-formamido-L-arabinose transferase (327 aa).

2 consecutive transmembrane segments (helical) span residues 236 to 256 and 270 to 290; these read LSLVGSVIALSGFTLAVLLVV and VFTLFAVLFMFIGAQFVGMGL.

Belongs to the glycosyltransferase 2 family.

The protein resides in the cell inner membrane. It catalyses the reaction UDP-4-deoxy-4-formamido-beta-L-arabinose + di-trans,octa-cis-undecaprenyl phosphate = 4-deoxy-4-formamido-alpha-L-arabinopyranosyl di-trans,octa-cis-undecaprenyl phosphate + UDP. Its pathway is glycolipid biosynthesis; 4-amino-4-deoxy-alpha-L-arabinose undecaprenyl phosphate biosynthesis; 4-amino-4-deoxy-alpha-L-arabinose undecaprenyl phosphate from UDP-4-deoxy-4-formamido-beta-L-arabinose and undecaprenyl phosphate: step 1/2. It functions in the pathway bacterial outer membrane biogenesis; lipopolysaccharide biosynthesis. Functionally, catalyzes the transfer of 4-deoxy-4-formamido-L-arabinose from UDP to undecaprenyl phosphate. The modified arabinose is attached to lipid A and is required for resistance to polymyxin and cationic antimicrobial peptides. The chain is Undecaprenyl-phosphate 4-deoxy-4-formamido-L-arabinose transferase from Yersinia enterocolitica serotype O:8 / biotype 1B (strain NCTC 13174 / 8081).